A 337-amino-acid chain; its full sequence is 2-oxoglutarate-Fe(II) type oxidoreductase (337 aa).

Positions 179-282 (AIATLRYLHY…RYSIPFFFTG (104 aa)) constitute a Fe2OG dioxygenase domain. The Fe cation site is built by histidine 205, aspartate 207, and histidine 263. 2-oxoglutarate is bound at residue arginine 273.

Belongs to the iron/ascorbate-dependent oxidoreductase family. It depends on Fe(2+) as a cofactor. As to expression, endocrocin is specifically produced in conidia.

The protein operates within secondary metabolite biosynthesis. Its function is as follows. 2-oxoglutarate-Fe(II) type oxidoreductase; part of the gene cluster that mediates the biosynthesis of endocrocin, a simple anthraquinone interesting for many biotechnological applications. The pathway begins with the synthesis of atrochrysone thioester by the polyketide synthase (PKS) encA. The atrochrysone carboxyl ACP thioesterase encB then breaks the thioester bond and releases the atrochrysone carboxylic acid from encA. The atrochrysone carboxylic acid is then converted to endocrocin anthrone which is further oxidized into endocrocin by encC. The exact function of encD has not been identified yet, but it negatively regulates endocrocin production, likely through the modification of endocrocin itself. The sequence is that of 2-oxoglutarate-Fe(II) type oxidoreductase from Aspergillus fumigatus (strain ATCC MYA-4609 / CBS 101355 / FGSC A1100 / Af293) (Neosartorya fumigata).